A 283-amino-acid chain; its full sequence is Bifunctional protein FolD 2 (283 aa).

NADP(+) is bound by residues 165–167 (GRG), T192, and V233.

It belongs to the tetrahydrofolate dehydrogenase/cyclohydrolase family. Homodimer.

It catalyses the reaction (6R)-5,10-methylene-5,6,7,8-tetrahydrofolate + NADP(+) = (6R)-5,10-methenyltetrahydrofolate + NADPH. The enzyme catalyses (6R)-5,10-methenyltetrahydrofolate + H2O = (6R)-10-formyltetrahydrofolate + H(+). It functions in the pathway one-carbon metabolism; tetrahydrofolate interconversion. In terms of biological role, catalyzes the oxidation of 5,10-methylenetetrahydrofolate to 5,10-methenyltetrahydrofolate and then the hydrolysis of 5,10-methenyltetrahydrofolate to 10-formyltetrahydrofolate. The polypeptide is Bifunctional protein FolD 2 (Saccharopolyspora erythraea (strain ATCC 11635 / DSM 40517 / JCM 4748 / NBRC 13426 / NCIMB 8594 / NRRL 2338)).